We begin with the raw amino-acid sequence, 438 residues long: Glycogen synthase (438 aa).

Lys-16 serves as a coordination point for ADP-alpha-D-glucose.

It belongs to the glycosyltransferase 1 family. Bacterial/plant glycogen synthase subfamily.

The enzyme catalyses [(1-&gt;4)-alpha-D-glucosyl](n) + ADP-alpha-D-glucose = [(1-&gt;4)-alpha-D-glucosyl](n+1) + ADP + H(+). Its pathway is glycan biosynthesis; glycogen biosynthesis. Synthesizes alpha-1,4-glucan chains using ADP-glucose. In Thermus caldophilus, this protein is Glycogen synthase.